A 218-amino-acid polypeptide reads, in one-letter code: Sodium channel regulatory subunit beta-1 (218 aa).

The first 18 residues, 1–18 (MGRLLALVVGAALVSSAC), serve as a signal peptide directing secretion. The Extracellular portion of the chain corresponds to 19–157 (GGCVEVDSET…DKANRDMASI (139 aa)). Cystine bridges form between Cys-21-Cys-43 and Cys-40-Cys-121. An Ig-like C2-type domain is found at 22-150 (VEVDSETEAV…KIHIEVVDKA (129 aa)). N-linked (GlcNAc...) asparagine glycosylation is found at Asn-93, Asn-110, Asn-114, and Asn-135. Residues 158 to 179 (VSEIMMYVLIVVLTIWLVAEMI) form a helical membrane-spanning segment. Residues 180 to 218 (YCYKKIAAATETAAQENASEYLAITSESKENCTGVQVAE) are Cytoplasmic-facing.

The protein belongs to the sodium channel auxiliary subunit SCN1B (TC 8.A.17) family. Voltage-gated sodium (Nav) channel consists of an ion-conducting pore-forming alpha subunit functional on its own that is regulated by one or more beta subunits. Interacts with SCN1A; regulatory subunit of SCN1A/Nav1.1. Interacts with SCN3A; regulatory subunit of SCN3A/Nav1.3. Interacts with SCN4A; regulatory subunit of SCN4A/Nav1.4. Interacts with SCN5A; regulatory subunit of SCN5A/Nav1.5. Interacts with SCN8A; regulatory subunit of SCN8A/Nav1.6. Interacts with SCN9A; regulatory subunit of SCN9A/Nav1.7. Interacts with SCN10A; regulatory subunit of SCN10A/Nav1.8. Interacts with NFASC. Interacts with TMEM65. As to expression, the overall expression of isoform 1 and isoform 2 is very similar. Isoform 1 is abundantly expressed in skeletal muscle, heart and brain. Isoform 2 is highly expressed in brain and skeletal muscle and present at a very low level in heart, placenta, lung, liver, kidney and pancreas. In brain, isoform 2 is most abundant in the cerebellum, followed by the cerebral cortex and occipital lobe, while isoform 1 levels are higher in the cortex compared to the cerebellum. Isoform 2 is expressed in many regions of the brain, including cerebellar Purkinje cells, cortex pyramidal neurons and many of the neuronal fibers throughout the brain (at protein level). Also detected in dorsal root ganglion, in fibers of the spinal nerve and in cortical neurons and their processes (at protein level).

It localises to the cell membrane. Its subcellular location is the perikaryon. It is found in the cell projection. The protein resides in the axon. The protein localises to the secreted. In terms of biological role, regulatory subunit of multiple voltage-gated sodium (Nav) channels directly mediating the depolarization of excitable membranes. Navs, also called VGSCs (voltage-gated sodium channels) or VDSCs (voltage-dependent sodium channels), operate by switching between closed and open conformations depending on the voltage difference across the membrane. In the open conformation they allow Na(+) ions to selectively pass through the pore, along their electrochemical gradient. The influx of Na+ ions provokes membrane depolarization, initiating the propagation of electrical signals throughout cells and tissues. The accessory beta subunits participate in localization and functional modulation of the Nav channels. Modulates the activity of SCN1A/Nav1.1, SCN2A/Nav1.2, SCN3A/Nav1.3, SCN4A/Nav1.4, SCN5A/Nav1.5, SCN8A/Nav1.6, SCN9A/Nav1.7 and SCN10A/Nav1.8. Functionally, cell adhesion molecule that plays a critical role in neuronal migration and pathfinding during brain development. Stimulates neurite outgrowth. Has no regulatory function on the SCN2A sodium channel complex. The sequence is that of Sodium channel regulatory subunit beta-1 from Homo sapiens (Human).